The following is a 425-amino-acid chain: CinA-like protein (425 aa).

This sequence belongs to the CinA family.

This Trichodesmium erythraeum (strain IMS101) protein is CinA-like protein.